Reading from the N-terminus, the 325-residue chain is Glutarate 2-hydroxylase (325 aa).

Fe cation-binding residues include His-160, Asp-162, and His-292.

Belongs to the glutarate hydroxylase family. Homotetramer. Requires Fe(2+) as cofactor.

It catalyses the reaction glutarate + 2-oxoglutarate + O2 = (S)-2-hydroxyglutarate + succinate + CO2. The protein operates within amino-acid degradation. Functionally, acts as an alpha-ketoglutarate-dependent dioxygenase catalyzing hydroxylation of glutarate (GA) to L-2-hydroxyglutarate (L2HG). Functions in a L-lysine degradation pathway that proceeds via cadaverine, glutarate and L-2-hydroxyglutarate. The protein is Glutarate 2-hydroxylase of Escherichia coli (strain K12 / MC4100 / BW2952).